We begin with the raw amino-acid sequence, 295 residues long: Cytidine deaminase (295 aa).

CMP/dCMP-type deaminase domains are found at residues 48–168 (ADDE…FGPA) and 187–295 (EETT…YLAI). 89 to 91 (NLE) contributes to the substrate binding site. His102 contributes to the Zn(2+) binding site. Glu104 acts as the Proton donor in catalysis. Residues Cys129 and Cys132 each coordinate Zn(2+).

This sequence belongs to the cytidine and deoxycytidylate deaminase family. As to quaternary structure, homodimer. It depends on Zn(2+) as a cofactor.

It catalyses the reaction cytidine + H2O + H(+) = uridine + NH4(+). The catalysed reaction is 2'-deoxycytidine + H2O + H(+) = 2'-deoxyuridine + NH4(+). This enzyme scavenges exogenous and endogenous cytidine and 2'-deoxycytidine for UMP synthesis. This chain is Cytidine deaminase, found in Vibrio atlanticus (strain LGP32) (Vibrio splendidus (strain Mel32)).